Reading from the N-terminus, the 556-residue chain is Acetyl-coenzyme A thioesterase (556 aa).

Positions 6 to 118 (APGEVLMSQA…FSTFVVKPLG (113 aa)) constitute a HotDog ACOT-type 1 domain. An N6-succinyllysine modification is found at Lys-34. CoA is bound by residues 54–56 (TAS) and 83–85 (STS). Residue Lys-97 is modified to N6-succinyllysine. Residue Arg-145 coordinates CoA. Lys-160 and Lys-229 each carry N6-succinyllysine. Positions 180–295 (MATSVQSIEL…FLIYNAVDDQ (116 aa)) constitute a HotDog ACOT-type 2 domain. 235–237 (KFR) is a binding site for CoA. Residues 341–550 (GTQWDISKKG…IKFIENATHD (210 aa)) form the START domain.

Homodimer or homotetramer.

The protein localises to the cytoplasm. Its subcellular location is the cytosol. It carries out the reaction acetyl-CoA + H2O = acetate + CoA + H(+). It catalyses the reaction butanoyl-CoA + H2O = butanoate + CoA + H(+). The enzyme catalyses hexanoyl-CoA + H2O = hexanoate + CoA + H(+). It participates in lipid metabolism; fatty acid metabolism. With respect to regulation, allosterically regulated by ATP (activator) and ADP (inhibitor). Cold labile, it dissociates into inactive monomers at low temperature. Its function is as follows. Catalyzes the hydrolysis of acyl-CoAs into free fatty acids and coenzyme A (CoASH), regulating their respective intracellular levels. Preferentially hydrolyzes acetyl-CoA. This is Acetyl-coenzyme A thioesterase (Acot12) from Rattus norvegicus (Rat).